A 447-amino-acid polypeptide reads, in one-letter code: MSMTPREIVHELNRHIIGQDDAKRAVAIALRNRWRRMQLPAELRAEVTPKNILMIGPTGVGKTEIARRLAKLANAPFLKVEATKFTEVGYVGRDVESIIRDLADAALKMLREQEIIRVRHRAEDAAEDRILDALLPQARVTSFSEEAAQTSSDSNTRQLFRKRLREGQLDDKEIEIEVADAVGVEIAAPPGMEEMTNQLQSLFANMGKGKRKARKLKVKEALKMVRDEEASRLVNEEELKAKALEAVEQHGIVFIDEIDKVAKRGNVGGADVSREGVQRDLLPLIEGCTVNTKLGMVKTDHILFIASGAFHLSKPSDLVPELQGRLPIRVELKALTPEDFERILQEPHASLTEQYQALLKTEGLNIEFLADGIKRLAEIAYQVNEKTENIGARRLHTLLERLLEEVSFSAGDLASTHDEAPIQIDAAYVNSHLGELAQNEDLSRYIL.

Residues isoleucine 17, 59–64 (GVGKTE), aspartate 256, glutamate 321, and arginine 393 each bind ATP.

Belongs to the ClpX chaperone family. HslU subfamily. As to quaternary structure, a double ring-shaped homohexamer of HslV is capped on each side by a ring-shaped HslU homohexamer. The assembly of the HslU/HslV complex is dependent on binding of ATP.

It is found in the cytoplasm. In terms of biological role, ATPase subunit of a proteasome-like degradation complex; this subunit has chaperone activity. The binding of ATP and its subsequent hydrolysis by HslU are essential for unfolding of protein substrates subsequently hydrolyzed by HslV. HslU recognizes the N-terminal part of its protein substrates and unfolds these before they are guided to HslV for hydrolysis. The protein is ATP-dependent protease ATPase subunit HslU of Pseudomonas putida (strain ATCC 47054 / DSM 6125 / CFBP 8728 / NCIMB 11950 / KT2440).